Here is a 448-residue protein sequence, read N- to C-terminus: Inositol hexakisphosphate kinase 2 (448 aa).

ATP-binding positions include Glu229–Leu231 and Asp242. Residues Pro238–Gly246, Lys244, and Lys258–Lys265 contribute to the substrate site. Asp405 is a binding site for ATP. His408 serves as a coordination point for substrate.

It belongs to the inositol phosphokinase (IPK) family. In terms of tissue distribution, highly expressed in brain and lung, and at slightly lower levels in liver, kidney and testis.

Its subcellular location is the nucleus. The enzyme catalyses 1D-myo-inositol hexakisphosphate + ATP = 5-diphospho-1D-myo-inositol 1,2,3,4,6-pentakisphosphate + ADP. The protein operates within phospholipid metabolism; phosphatidylinositol metabolism. Its function is as follows. Converts inositol hexakisphosphate (InsP6) to diphosphoinositol pentakisphosphate (InsP7/PP-InsP5). May play a role in the regulation of Na(+)-dependent phosphate cotransport, possibly via its role in diphosphoinositol pentakisphosphate (InsP7/PP-InsP5) biosynthesis. This is Inositol hexakisphosphate kinase 2 (Ip6k2) from Mus musculus (Mouse).